The sequence spans 381 residues: Probable envelope ADP,ATP carrier protein, chloroplastic (381 aa).

The transit peptide at 1 to 26 (MEEDRAILTFHRIPSLNSSLITTSSP) directs the protein to the chloroplast. 5 consecutive transmembrane segments (helical) span residues 78-98 (LAIL…ALAG), 154-179 (LPQV…NLFK), 191-211 (LAAG…LDVL), 237-257 (IASF…YIAV), and 281-301 (LLTA…LDTV). 3 Solcar repeats span residues 85 to 177 (PKDA…YKNL), 185 to 268 (LSVI…VKKS), and 279 to 359 (SSLL…VKRL). R159 is a binding site for ADP. R302 provides a ligand contact to ADP. The chain crosses the membrane as a helical span at residues 334-360 (GFLPNALKTLPNSSIRLTTFDMVKRLI).

It belongs to the mitochondrial carrier (TC 2.A.29) family.

The protein localises to the plastid. It is found in the chloroplast membrane. Transports adenine nucleotides. The polypeptide is Probable envelope ADP,ATP carrier protein, chloroplastic (EAAC) (Arabidopsis thaliana (Mouse-ear cress)).